A 504-amino-acid chain; its full sequence is ATP synthase subunit alpha (504 aa).

Glycine 169–threonine 176 is a binding site for ATP.

The protein belongs to the ATPase alpha/beta chains family. As to quaternary structure, F-type ATPases have 2 components, CF(1) - the catalytic core - and CF(0) - the membrane proton channel. CF(1) has five subunits: alpha(3), beta(3), gamma(1), delta(1), epsilon(1). CF(0) has three main subunits: a(1), b(2) and c(9-12). The alpha and beta chains form an alternating ring which encloses part of the gamma chain. CF(1) is attached to CF(0) by a central stalk formed by the gamma and epsilon chains, while a peripheral stalk is formed by the delta and b chains.

It is found in the cell membrane. It catalyses the reaction ATP + H2O + 4 H(+)(in) = ADP + phosphate + 5 H(+)(out). Produces ATP from ADP in the presence of a proton gradient across the membrane. The alpha chain is a regulatory subunit. In Clostridium botulinum (strain Alaska E43 / Type E3), this protein is ATP synthase subunit alpha.